We begin with the raw amino-acid sequence, 154 residues long: Lipoprotein signal peptidase (154 aa).

2 helical membrane-spanning segments follow: residues 55 to 75 and 84 to 104; these read GHMW…IYIM and LFSI…IDRV. Catalysis depends on residues D111 and D129. The helical transmembrane segment at 124-144 threads the bilayer; the sequence is IFNVADASLSVGVVLMLVYVF.

This sequence belongs to the peptidase A8 family.

It is found in the cell membrane. It carries out the reaction Release of signal peptides from bacterial membrane prolipoproteins. Hydrolyzes -Xaa-Yaa-Zaa-|-(S,diacylglyceryl)Cys-, in which Xaa is hydrophobic (preferably Leu), and Yaa (Ala or Ser) and Zaa (Gly or Ala) have small, neutral side chains.. The protein operates within protein modification; lipoprotein biosynthesis (signal peptide cleavage). Functionally, this protein specifically catalyzes the removal of signal peptides from prolipoproteins. This is Lipoprotein signal peptidase from Listeria monocytogenes serovar 1/2a (strain ATCC BAA-679 / EGD-e).